The chain runs to 495 residues: Cobyric acid synthase (495 aa).

The region spanning 249 to 443 (EININVIRLP…LHGLFDNGAW (195 aa)) is the GATase cobBQ-type domain. Cysteine 330 serves as the catalytic Nucleophile. Histidine 435 is an active-site residue.

It belongs to the CobB/CobQ family. CobQ subfamily.

It functions in the pathway cofactor biosynthesis; adenosylcobalamin biosynthesis. Functionally, catalyzes amidations at positions B, D, E, and G on adenosylcobyrinic A,C-diamide. NH(2) groups are provided by glutamine, and one molecule of ATP is hydrogenolyzed for each amidation. The chain is Cobyric acid synthase from Gloeothece citriformis (strain PCC 7424) (Cyanothece sp. (strain PCC 7424)).